A 415-amino-acid chain; its full sequence is Serine--tRNA ligase (415 aa).

An L-serine-binding site is contributed by 231–233 (TAE). Residue 262-264 (RSE) coordinates ATP. Residue Glu285 coordinates L-serine. 349–352 (EISS) provides a ligand contact to ATP. Ser383 lines the L-serine pocket.

The protein belongs to the class-II aminoacyl-tRNA synthetase family. Type-1 seryl-tRNA synthetase subfamily. As to quaternary structure, homodimer. The tRNA molecule binds across the dimer.

Its subcellular location is the cytoplasm. The enzyme catalyses tRNA(Ser) + L-serine + ATP = L-seryl-tRNA(Ser) + AMP + diphosphate + H(+). It carries out the reaction tRNA(Sec) + L-serine + ATP = L-seryl-tRNA(Sec) + AMP + diphosphate + H(+). The protein operates within aminoacyl-tRNA biosynthesis; selenocysteinyl-tRNA(Sec) biosynthesis; L-seryl-tRNA(Sec) from L-serine and tRNA(Sec): step 1/1. In terms of biological role, catalyzes the attachment of serine to tRNA(Ser). Is also able to aminoacylate tRNA(Sec) with serine, to form the misacylated tRNA L-seryl-tRNA(Sec), which will be further converted into selenocysteinyl-tRNA(Sec). The chain is Serine--tRNA ligase from Helicobacter pylori (strain HPAG1).